The sequence spans 612 residues: MEKVDTSGRLSKLRELMRAHSIDVYVVPSEDSHSSEYIAACDARREFISGFSGSAGCAVITLDKAALATDGRYFNQASKQLDHNWLLLKQGLQDVPTWQDWSAEQSAGGKIVAVDPELIAAAAAKKLAAKIHKFGGSELVALERNLVDVVWGKDRPDRPRNPVVILDTAFSGKNVETKLRDLRQELVKKDSLGMVVSMLDEVAWLLNLRGSDIPYNPVFFSYAVITLDTATLFVDDTKLHPDSLEYLRKNGIVTKPYSCIFDDVKALTSSKGVQGREKRTLLSSKASWALKRALGGDDLVEEVRSFIGDAKAVKNEAELAGMRACHIRDGIALIEYFAWLEDQLVAKRIVLDEVEAADKLEELRQKQENYVGLSFDTISSTGANAAVIHYKPERGSCPAIDPEAIYLCDSGAQYLDGTTDVTRTVHFGCPTAAEKLAYTLVLKGNIALDSAIFPKGTTGFALDCLARQHLWREGLDYRHGTGHGVGSYLNVHEGPIGIGTRVQFAEVSLASGNVVSIEPGFYEDGAFGIRIENLAIVREVQTQHSFGDKPYLGFEHVTMAPYCKNLIDISILTTAEKEWLNAHNTDIFNKTKDAFKDDALTLAWLTRETQPI.

Mn(2+) contacts are provided by aspartate 409, aspartate 420, glutamate 518, and glutamate 532.

Belongs to the peptidase M24B family. Mn(2+) serves as cofactor.

The catalysed reaction is Release of any N-terminal amino acid, including proline, that is linked to proline, even from a dipeptide or tripeptide.. Functionally, catalyzes the removal of a penultimate prolyl residue from the N-termini of peptides. The polypeptide is Probable Xaa-Pro aminopeptidase P (AMPP) (Verticillium alfalfae (strain VaMs.102 / ATCC MYA-4576 / FGSC 10136) (Verticillium wilt of alfalfa)).